The primary structure comprises 114 residues: MLYINSFLDRMGEIIRGEKSVEEADKLLDQKNIFEMFRSDCEEILNLYKSGKAEKEEVQRNFYLLKTYVVSQLSIHFERLKEFAESKGFKIEKKLDPEVINEIALYIDRVEKEV.

This is an uncharacterized protein from Archaeoglobus fulgidus (strain ATCC 49558 / DSM 4304 / JCM 9628 / NBRC 100126 / VC-16).